The chain runs to 136 residues: Small ribosomal subunit protein uS9 (136 aa).

Residues 95-136 (GLSPDNRKPLKTEGHLSRDPRSKERKKYGLKKARKAGQFSKR) form a disordered region. Residues 99–116 (DNRKPLKTEGHLSRDPRS) are compositionally biased toward basic and acidic residues. Over residues 117–136 (KERKKYGLKKARKAGQFSKR) the composition is skewed to basic residues.

The protein belongs to the universal ribosomal protein uS9 family.

This is Small ribosomal subunit protein uS9 from Prochlorococcus marinus subsp. pastoris (strain CCMP1986 / NIES-2087 / MED4).